The primary structure comprises 366 residues: tRNA-specific 2-thiouridylase MnmA (366 aa).

ATP-binding positions include 6–13 (AMSGGVDS) and Leu-32. Residue Cys-101 is the Nucleophile of the active site. Cys-101 and Cys-199 are disulfide-bonded. Gly-125 contributes to the ATP binding site. The interaction with tRNA stretch occupies residues 149–151 (KDQ). Residue Cys-199 is the Cysteine persulfide intermediate of the active site.

The protein belongs to the MnmA/TRMU family.

It is found in the cytoplasm. The catalysed reaction is S-sulfanyl-L-cysteinyl-[protein] + uridine(34) in tRNA + AH2 + ATP = 2-thiouridine(34) in tRNA + L-cysteinyl-[protein] + A + AMP + diphosphate + H(+). Functionally, catalyzes the 2-thiolation of uridine at the wobble position (U34) of tRNA, leading to the formation of s(2)U34. The chain is tRNA-specific 2-thiouridylase MnmA from Corynebacterium diphtheriae (strain ATCC 700971 / NCTC 13129 / Biotype gravis).